Consider the following 156-residue polypeptide: Ribosomal RNA large subunit methyltransferase H (156 aa).

S-adenosyl-L-methionine-binding positions include Leu73, Gly104, and 123–128; that span reads ISSMTL.

Belongs to the RNA methyltransferase RlmH family. Homodimer.

Its subcellular location is the cytoplasm. The catalysed reaction is pseudouridine(1915) in 23S rRNA + S-adenosyl-L-methionine = N(3)-methylpseudouridine(1915) in 23S rRNA + S-adenosyl-L-homocysteine + H(+). Specifically methylates the pseudouridine at position 1915 (m3Psi1915) in 23S rRNA. The protein is Ribosomal RNA large subunit methyltransferase H of Janthinobacterium sp. (strain Marseille) (Minibacterium massiliensis).